The following is an 880-amino-acid chain: Chaperone protein ClpB 1 (880 aa).

The region spanning 6 to 148 (PNKFTDKAWE…EASIKAVRGS (143 aa)) is the Clp R domain. Repeat regions lie at residues 9-74 (FTDK…TQRQ) and 85-148 (LGRS…VRGS). The NBD1 stretch occupies residues 161 to 343 (EALQKFGRDL…RRFQQVYVDQ (183 aa)). ATP is bound at residue 208–215 (GEPGVGKT). Positions 344–554 (PSVENTISIL…IAEIVAKWTG (211 aa)) are linker. Residues 394 to 530 (IDLVDEAAAQ…KEAKLLELQS (137 aa)) adopt a coiled-coil conformation. An NBD2 region spans residues 564-775 (ERQKLLQLES…RVDDTILFHA (212 aa)). 614–621 (GPTGVGKT) provides a ligand contact to ATP. The tract at residues 776-880 (LSRSEMSHII…VKVSVTQITT (105 aa)) is C-terminal.

It belongs to the ClpA/ClpB family. As to quaternary structure, homohexamer. The oligomerization is ATP-dependent.

It localises to the cytoplasm. Functionally, part of a stress-induced multi-chaperone system, it is involved in the recovery of the cell from heat-induced damage, in cooperation with DnaK, DnaJ and GrpE. Acts before DnaK, in the processing of protein aggregates. Protein binding stimulates the ATPase activity; ATP hydrolysis unfolds the denatured protein aggregates, which probably helps expose new hydrophobic binding sites on the surface of ClpB-bound aggregates, contributing to the solubilization and refolding of denatured protein aggregates by DnaK. This Nostoc sp. (strain PCC 7120 / SAG 25.82 / UTEX 2576) protein is Chaperone protein ClpB 1 (clpB1).